A 62-amino-acid chain; its full sequence is Beta-defensin 37 (62 aa).

The N-terminal stretch at 1-16 (MKFSYFLLLLLSLSNF) is a signal peptide. 3 cysteine pairs are disulfide-bonded: C29/C58, C36/C51, and C41/C59.

The protein belongs to the beta-defensin family. As to expression, only expressed in epididymis (corpus and cauda).

Its subcellular location is the secreted. Functionally, has antibacterial activity. The chain is Beta-defensin 37 (Defb37) from Mus musculus (Mouse).